Reading from the N-terminus, the 593-residue chain is Meiosis-specific APC/C activator protein AMA1 (593 aa).

The span at 1–11 (MATPHLYHRYN) shows a compositional bias: basic residues. The disordered stretch occupies residues 1 to 26 (MATPHLYHRYNSKSSNKNINSSGNST). Over residues 12–25 (SKSSNKNINSSGNS) the composition is skewed to low complexity. The C-box motif lies at 29–35 (DRFIPKS). Over residues 94–109 (SSISSSSESQVTRSGS) the composition is skewed to low complexity. A disordered region spans residues 94–125 (SSISSSSESQVTRSGSARASRNDYSKLTKEQK). Residues 113-125 (SRNDYSKLTKEQK) show a composition bias toward basic and acidic residues. WD repeat units follow at residues 226–264 (RNDF…VSIL), 271–310 (EKRD…HSSN), 323–364 (ESFK…FPIK), 388–427 (AQAQ…KPIK), 432–474 (PHKA…LLDE), and 525–564 (PNPL…EEII).

This sequence belongs to the WD repeat CDC20/Fizzy family. In terms of assembly, interacts with CDC16.

Functionally, activator protein that regulates the ubiquitin ligase activity and substrate specificity of the anaphase promoting complex/cyclosome (APC/C). Required for the ubiquitination and subsequent degradation of the B-type cyclin CLB1 by the APC/C complex during meiosis. Required for meiosis I, late meiotic gene expression and spore wall assembly. This is Meiosis-specific APC/C activator protein AMA1 (AMA1) from Saccharomyces cerevisiae (strain ATCC 204508 / S288c) (Baker's yeast).